Here is a 256-residue protein sequence, read N- to C-terminus: Tryptophan synthase alpha chain (256 aa).

Catalysis depends on proton acceptor residues Glu45 and Asp56.

The protein belongs to the TrpA family. As to quaternary structure, tetramer of two alpha and two beta chains.

It catalyses the reaction (1S,2R)-1-C-(indol-3-yl)glycerol 3-phosphate + L-serine = D-glyceraldehyde 3-phosphate + L-tryptophan + H2O. The protein operates within amino-acid biosynthesis; L-tryptophan biosynthesis; L-tryptophan from chorismate: step 5/5. In terms of biological role, the alpha subunit is responsible for the aldol cleavage of indoleglycerol phosphate to indole and glyceraldehyde 3-phosphate. In Christiangramia forsetii (strain DSM 17595 / CGMCC 1.15422 / KT0803) (Gramella forsetii), this protein is Tryptophan synthase alpha chain.